The sequence spans 563 residues: Putative solute carrier family 26 member 10P (563 aa).

5 consecutive transmembrane segments (helical) span residues 45 to 65 (ALLASVPPVFGLYTSFFPVLI), 75 to 91 (LSTGTFAILSLMTGSAV), 116 to 136 (VGVAAAVAFGSGALMLGMFVL), 152 to 172 (ALTSGAALHVLLSQLPSLLGL), and 352 to 372 (LAGLFSCTVVLSVLLWLGPFF). The STAS domain occupies 406 to 541 (RVDFLLQVPG…VSVQDAAAYA (136 aa)).

Belongs to the SLC26A/SulP transporter (TC 2.A.53) family.

The protein localises to the membrane. Its function is as follows. Chloride/bicarbonate exchanger. In Homo sapiens (Human), this protein is Putative solute carrier family 26 member 10P (SLC26A10P).